We begin with the raw amino-acid sequence, 572 residues long: Urease subunit alpha (572 aa).

Positions 134–572 constitute a Urease domain; that stretch reads AGIDSHIHLI…AAMNQRYFFG (439 aa). Histidine 139, histidine 141, and lysine 222 together coordinate Ni(2+). N6-carboxylysine is present on lysine 222. Histidine 224 lines the substrate pocket. Histidine 251 and histidine 277 together coordinate Ni(2+). Residue histidine 325 is the Proton donor of the active site. Residue aspartate 365 coordinates Ni(2+).

The protein belongs to the metallo-dependent hydrolases superfamily. Urease alpha subunit family. In terms of assembly, heterotrimer of UreA (gamma), UreB (beta) and UreC (alpha) subunits. Three heterotrimers associate to form the active enzyme. Ni cation serves as cofactor. In terms of processing, carboxylation allows a single lysine to coordinate two nickel ions.

It localises to the cytoplasm. It carries out the reaction urea + 2 H2O + H(+) = hydrogencarbonate + 2 NH4(+). It functions in the pathway nitrogen metabolism; urea degradation; CO(2) and NH(3) from urea (urease route): step 1/1. The sequence is that of Urease subunit alpha from Yersinia enterocolitica serotype O:8 / biotype 1B (strain NCTC 13174 / 8081).